Consider the following 158-residue polypeptide: Disulfide bond formation protein B (158 aa).

The Cytoplasmic segment spans residues 1 to 7 (MKNSRPV). A helical transmembrane segment spans residues 8-24 (LFAVALASLLLLAVALY). Residues 25–42 (LQHVENMLPCPLCVIQRY) are Periplasmic-facing. Cysteine 34 and cysteine 37 form a disulfide bridge. Residues 43-57 (AFAAIALICLVTAFR) form a helical membrane-spanning segment. Residues 58–63 (TEVTAR) are Cytoplasmic-facing. A helical membrane pass occupies residues 64–81 (IGAALAALASLAGAGVAG). At 82 to 136 (WHIYIKAHPTVSCGIDPLETSLNTIPTAKLLPFLLQADGLCTTEYAPIMGLSIPQ) the chain is on the periplasmic side. An intrachain disulfide couples cysteine 94 to cysteine 122. The chain crosses the membrane as a helical span at residues 137–155 (WALVWFIVIALFLLHTAFR). Over 156 to 158 (KKS) the chain is Cytoplasmic.

Belongs to the DsbB family.

It is found in the cell inner membrane. In terms of biological role, required for disulfide bond formation in some periplasmic proteins. Acts by oxidizing the DsbA protein. This is Disulfide bond formation protein B from Herminiimonas arsenicoxydans.